The primary structure comprises 1410 residues: ABC transporter C family member 13 (1410 aa).

8 helical membrane-spanning segments follow: residues 23–43, 60–80, 88–108, 122–142, 148–168, 391–411, 474–494, and 505–525; these read IVLG…LTIT, LLYV…VLLV, VILC…ILSL, ILCF…NMIF, QEIC…VLRI, LSGL…SVLI, VFFW…LFAL, and FTCL…PWVI. One can recognise an ABC transmembrane type-1 1 domain in the interval 255 to 530; it reads CNNYSTPSLI…FPWVINGLID (276 aa). An ABC transporter 1 domain is found at 564–791; the sequence is VCVEDASCTW…ISPTFSLTNE (228 aa). 602-609 is an ATP binding site; it reads GEVGSGKT. 6 helical membrane passes run 844-864, 889-909, 963-985, 990-1009, 1087-1107, and 1111-1131; these read AVFS…LMQG, TSFY…LTLV, SLPF…IVVL, VLFL…LQVF, IVLF…PISF, and GLVG…GSLL. The region spanning 852–1139 is the ABC transmembrane type-1 2 domain; sequence TIVILVSAVL…LLTSFTETEK (288 aa). The ABC transporter 2 domain maps to 1174–1407; sequence VEFHNVTMRY…DSSTFSSFVR (234 aa). An ATP-binding site is contributed by 1208-1215; that stretch reads GRTGAGKS.

This sequence belongs to the ABC transporter superfamily. ABCC family. Conjugate transporter (TC 3.A.1.208) subfamily. As to expression, ubiquitous.

It localises to the membrane. The catalysed reaction is ATP + H2O + xenobioticSide 1 = ADP + phosphate + xenobioticSide 2.. Pump for glutathione S-conjugates. The protein is ABC transporter C family member 13 (ABCC13) of Arabidopsis thaliana (Mouse-ear cress).